We begin with the raw amino-acid sequence, 1167 residues long: White collar 1 protein (1167 aa).

Disordered stretches follow at residues 1-91 (MNNN…MSGG) and 307-355 (STPA…GASQ). Residues 21–57 (QHQQQQQQQQQQQQQQQQQQQQQQQQQQQQHQHQQQQ) are compositionally biased toward low complexity. Polar residues-rich tracts occupy residues 70-91 (TPPT…MSGG) and 307-325 (STPA…TQTI). The span at 335–348 (VTNAPTPAPFTSTP) shows a compositional bias: low complexity. The 72-residue stretch at 381–452 (KLKLGAVDMS…KREFVENNAV (72 aa)) folds into the PAS 1 domain. Cys428 is modified (S-4a-FMN cysteine). Residues 469–508 (LINYRKGGKPFLNLLTMIPIPWDTEEIRYFIGFQIDLVEC) form the PAC 1 domain. Residues 574 to 644 (KQSWDKMLLE…RELKEAQQHT (71 aa)) enclose the PAS 2 domain. Residues 650-691 (FRIRRKNSGYTWFESHGTLFNEQGKGRKCIILVGRKRPVFAL) form the PAC 2 domain. The region spanning 693 to 763 (RKDLELNGGI…RTIEKARKGK (71 aa)) is the PAS 3 domain. Low complexity predominate over residues 849–861 (MSKSGSSDSTGAM). Disordered regions lie at residues 849-872 (MSKS…GPGQ), 918-952 (KKKR…PSGN), 966-1047 (QTGR…TGST), and 1060-1167 (VNAL…GLSV). The segment at 934-959 (CANCHTRNTPEWRRGPSGNRDLCNSC) adopts a GATA-type zinc-finger fold. The segment covering 968-977 (GRVSPRTSSR) has biased composition (polar residues). Residues 986-995 (KKSNSPSHSS) show a composition bias toward low complexity. Positions 1004-1033 (DSPSTTTATKNSPSLRGSSTTAPGTITTDS) are enriched in polar residues. 2 stretches are compositionally biased toward low complexity: residues 1036-1047 (AVASSASGTGST) and 1104-1128 (QHQQ…QQHQ).

As to quaternary structure, heterodimer of wc-1 and wc-2. FMN binds covalently to cysteine after exposure to blue light and is reversed in the dark.

The protein resides in the nucleus. Functionally, may function as a transcription factor involved in light regulation. Binds and affects blue light regulation of the al-3 gene. Wc-1 and wc-2 proteins interact via homologous PAS domains, bind to promoters of light regulated genes such as frq, and activate transcription. The chain is White collar 1 protein (wc-1) from Neurospora crassa (strain ATCC 24698 / 74-OR23-1A / CBS 708.71 / DSM 1257 / FGSC 987).